Here is a 284-residue protein sequence, read N- to C-terminus: RNA polymerase sigma factor RpoH (284 aa).

Residues 54-123 (MVLAHLRFVV…IHEFILRNWR (70 aa)) are sigma-70 factor domain-2. The Interaction with polymerase core subunit RpoC signature appears at 78-81 (DLIQ). The sigma-70 factor domain-4 stretch occupies residues 229–280 (ALEGLDERSRDILQQRWLSEEKATLHDLAEKYNVSAERIRQLEKNAMSKLKG). Residues 253-272 (LHDLAEKYNVSAERIRQLEK) constitute a DNA-binding region (H-T-H motif).

This sequence belongs to the sigma-70 factor family. RpoH subfamily. In terms of assembly, interacts with the RNA polymerase core enzyme.

Its subcellular location is the cytoplasm. In terms of biological role, sigma factors are initiation factors that promote the attachment of RNA polymerase to specific initiation sites and are then released. This sigma factor is involved in regulation of expression of heat shock genes. The chain is RNA polymerase sigma factor RpoH from Pseudomonas aeruginosa (strain ATCC 15692 / DSM 22644 / CIP 104116 / JCM 14847 / LMG 12228 / 1C / PRS 101 / PAO1).